We begin with the raw amino-acid sequence, 793 residues long: Kinesin-like protein KIN-14C (793 aa).

The disordered stretch occupies residues 1-43 (MASRNQNRPPRSPNAKKEGLGGISFDKRRKVETQGGTGRRQAF). The interval 1–69 (MASRNQNRPP…IEECGKVDFT (69 aa)) is globular. The segment covering 15–32 (AKKEGLGGISFDKRRKVE) has biased composition (basic and acidic residues). A coiled-coil region spans residues 120–375 (KENLKVSLES…EQQLAIANER (256 aa)). Residues 431 to 772 (NIRVFCRVRP…LRFAARVNAC (342 aa)) enclose the Kinesin motor domain. 516–523 (GQTGSGKT) is an ATP binding site.

The protein belongs to the TRAFAC class myosin-kinesin ATPase superfamily. Kinesin family. KIN-14 subfamily.

It is found in the cytoplasm. The protein localises to the cytoskeleton. Its subcellular location is the spindle. It localises to the phragmoplast. The protein resides in the chromosome. It is found in the centromere. The protein localises to the kinetochore. Kinesin that supports microtubule movement in an ATP-dependent manner and has a minus-end directed polarity. Plays a crucial role in spindle morphogenesis in male meiosis. In mitosis, is required for normal microtubule accumulation at the spindle poles during prophase and may play a role in spindle assembly during prometaphase. The chain is Kinesin-like protein KIN-14C from Arabidopsis thaliana (Mouse-ear cress).